A 638-amino-acid chain; its full sequence is Sodium- and chloride-dependent glycine transporter 1 (638 aa).

Positions Met1–Leu30 are disordered. The Cytoplasmic segment spans residues Met1–Glu40. The next 3 helical transmembrane spans lie at Phe41–Leu61, Gly68–Met88, and Val120–Phe140. Over Ser141 to Glu217 the chain is Extracellular. N-linked (GlcNAc...) asparagine glycosylation is found at Asn169, Asn172, Asn182, and Asn188. The next 9 membrane-spanning stretches (helical) occupy residues Val218–Ile238, Val247–Val267, Val292–Ile312, Ser339–Val359, Leu382–Leu402, Val438–Leu458, Tyr462–Ile482, Leu502–Phe522, and Val542–Phe562. Residues Gln563 to Ile638 are Cytoplasmic-facing. Phosphothreonine is present on Thr603. Residues Ser605 and Ser630 each carry the phosphoserine modification. The essential for interaction with EXOC1 stretch occupies residues Ser627–Ile638.

Belongs to the sodium:neurotransmitter symporter (SNF) (TC 2.A.22) family. SLC6A9 subfamily. In terms of assembly, interacts with EXOC1; interaction increases the transporter capacity of SLC6A9 probably by promoting its insertion into the cell membrane. Interacts with EXOC3 and EXOC4. Found only in the white matter of the CNS. As to expression, found in the gray matter of CNS as well as in macrophages and mast cells in peripheral tissues.

The protein localises to the cell membrane. The enzyme catalyses glycine(out) + chloride(out) + 2 Na(+)(out) = glycine(in) + chloride(in) + 2 Na(+)(in). Its activity is regulated as follows. Inhibited by sarcosine. Functionally, sodium- and chloride-dependent glycine transporter. Essential for regulating glycine concentrations at inhibitory glycinergic synapses. The sequence is that of Sodium- and chloride-dependent glycine transporter 1 (Slc6a9) from Rattus norvegicus (Rat).